A 627-amino-acid chain; its full sequence is Pescadillo homolog (627 aa).

The BRCT domain occupies arginine 321 to isoleucine 414. Disordered stretches follow at residues histidine 450 to aspartate 469, tyrosine 488 to proline 566, and threonine 595 to lysine 627. Residues serine 453 and serine 457 each carry the phosphoserine modification. Acidic residues-rich tracts occupy residues aspartate 454–aspartate 469 and valine 497–aspartate 521. Basic and acidic residues predominate over residues glutamate 522 to lysine 533. Residues lysine 540–valine 549 are compositionally biased toward basic residues. Basic and acidic residues-rich tracts occupy residues histidine 550 to leucine 559 and threonine 595 to alanine 615. A coiled-coil region spans residues lysine 582–leucine 625. Low complexity predominate over residues alanine 616–lysine 627.

This sequence belongs to the pescadillo family.

Its subcellular location is the nucleus. The protein resides in the nucleolus. It localises to the nucleoplasm. Required for maturation of ribosomal RNAs and formation of the large ribosomal subunit. This chain is Pescadillo homolog, found in Drosophila simulans (Fruit fly).